The following is a 156-amino-acid chain: 17.4 kDa class I heat shock protein (156 aa).

The sHSP domain maps to 42–156 (DVAAFTNAKV…PEVKSVDISG (115 aa)).

It belongs to the small heat shock protein (HSP20) family. May form oligomeric structures. Binds to AKR2A.

Its subcellular location is the cytoplasm. In Arabidopsis thaliana (Mouse-ear cress), this protein is 17.4 kDa class I heat shock protein (HSP17.4A).